Reading from the N-terminus, the 102-residue chain is Large ribosomal subunit protein uL24 (102 aa).

The protein belongs to the universal ribosomal protein uL24 family. As to quaternary structure, part of the 50S ribosomal subunit.

In terms of biological role, one of two assembly initiator proteins, it binds directly to the 5'-end of the 23S rRNA, where it nucleates assembly of the 50S subunit. Functionally, one of the proteins that surrounds the polypeptide exit tunnel on the outside of the subunit. This Paraburkholderia phytofirmans (strain DSM 17436 / LMG 22146 / PsJN) (Burkholderia phytofirmans) protein is Large ribosomal subunit protein uL24.